The sequence spans 616 residues: Chaperone protein HscA (616 aa).

This sequence belongs to the heat shock protein 70 family.

Chaperone involved in the maturation of iron-sulfur cluster-containing proteins. Has a low intrinsic ATPase activity which is markedly stimulated by HscB. Involved in the maturation of IscU. The polypeptide is Chaperone protein HscA (Enterobacter sp. (strain 638)).